The chain runs to 299 residues: MAELGLNEHHQNEVINYMRFARSKRGLRLKTVDSCFQDLKESRLVEETFTIDEVSEVLNGLQAVVHSEVESELINTAHTNVLLLRQLFSQAEKWYLKLQTDVSELENRELLEQVAEFEKAEFASSNKKPIIDITKPKLVPINEGGTTELLNKEILRLQQENEKLKSRLKTIETQAVNALDEKSKLERVLQDLQLDQGNQQDFIKAQDLDDLENTVAALKSEFQKTLNDKTENQKSLEENLAAAKHDLLRVQEQLSMAEKELEKKFQQTAAYRNMKEILTKKNDQIKDLRKRLAKYESED.

Positions 145 to 299 are interaction with BSS9; it reads GTTELLNKEI…KRLAKYESED (155 aa). Positions 145–299 form a coiled coil; sequence GTTELLNKEI…KRLAKYESED (155 aa).

This sequence belongs to the LZTFL1 family. Self-associates. Interacts with BBS9; the interaction mediates the association of LZTL1 with the BBsome complex and regulates BBSome ciliary trafficking.

Its subcellular location is the cytoplasm. Its function is as follows. Regulates ciliary localization of the BBSome complex. Together with the BBSome complex, controls SMO ciliary trafficking and contributes to the sonic hedgehog (SHH) pathway regulation. May play a role in neurite outgrowth. May have tumor suppressor function. This chain is Leucine zipper transcription factor-like protein 1 (Lztfl1), found in Rattus norvegicus (Rat).